Consider the following 238-residue polypeptide: Probable transcriptional regulatory protein SSU05_0402 (238 aa).

It belongs to the TACO1 family. YeeN subfamily.

Its subcellular location is the cytoplasm. The sequence is that of Probable transcriptional regulatory protein SSU05_0402 from Streptococcus suis (strain 05ZYH33).